A 511-amino-acid polypeptide reads, in one-letter code: MESTGSVGEAPGGPRVLVVGGGIAGLGAAQRLCGHSAFPHLRVLEATARAGGRIRSERCFGGVVEVGAHWIHGPSRGNPVFQLAAEYGLLGEKELSQENQLVETGGHVGLPSVSYASSGASVSLQLVAEMATLFYGLIDQTREFLHAAETPVPSVGEYLKKEIGQHVAGWTEDEETRKLKLAVLNSFFNLECCVSGTHSMDLVALAPFGEYTVLPGLDCTFSKGYQGLTNCMMAALPEDTVVFEKPVKTIHWNGSFQEAAFPGETFPVSVECEDGDRFPAHHVIVTVPLGFLREHLDTFFDPPLPAEKAEAIRKIGFGTNNKIFLEFEEPFWEPDCQLIQLVWEDTSPLEDAAPELQDAWFRKLIGFVVLPAFASVHVLCGFIAGLESEFMETLSDEEVLLCLTQVLRRVTGNPRLPAPKSVLRSRWHSAPYTRGSYSYVAVGSTGGDLDLLAQPLPADGAGAQLQILFAGEATHRTFYSTTHGALLSGWREADRLLSLWAPQVQQPRPRL.

The residue at position 1 (methionine 1) is an N-acetylmethionine. FAD-binding positions include alanine 24, glutamate 45, arginine 53, and 69–70 (HW). Residues histidine 72 and valine 194 each coordinate substrate. Valine 247 contributes to the FAD binding site. Asparagine 320 lines the substrate pocket. Residues glutamate 472 and 481–482 (TT) contribute to the FAD site. Residues 509–511 (PRL) carry the Microbody targeting signal motif.

Belongs to the flavin monoamine oxidase family. Monomer. It depends on FAD as a cofactor. Widely expressed. Not detected in spleen. Expressed at lower level in neoplastic tissues.

It localises to the peroxisome. The protein resides in the cytoplasm. The catalysed reaction is N(1)-acetylspermine + O2 + H2O = 3-acetamidopropanal + spermidine + H2O2. It carries out the reaction N(1)-acetylspermidine + O2 + H2O = 3-acetamidopropanal + putrescine + H2O2. The enzyme catalyses N(1),N(12)-diacetylspermine + O2 + H2O = 3-acetamidopropanal + N(1)-acetylspermidine + H2O2. Its pathway is amine and polyamine metabolism; spermine metabolism. Flavoenzyme which catalyzes the oxidation of N(1)-acetylspermine to spermidine and is thus involved in the polyamine back-conversion. Can also oxidize N(1)-acetylspermidine to putrescine. Substrate specificity: N(1)-acetylspermine = N(1)-acetylspermidine &gt; N(1),N(12)-diacylspermine &gt;&gt; spermine. Does not oxidize spermidine. Plays an important role in the regulation of polyamine intracellular concentration and has the potential to act as a determinant of cellular sensitivity to the antitumor polyamine analogs. In Homo sapiens (Human), this protein is Peroxisomal N(1)-acetyl-spermine/spermidine oxidase (PAOX).